Reading from the N-terminus, the 230-residue chain is Voltage-gated hydrogen channel 1 (230 aa).

Residues 1 to 58 lie on the Cytoplasmic side of the membrane; sequence MAGCLRHFTSVGDDTKKKAWKEEDVEVAHEEEPKNTPHPFIASYSFRGALKWLFSSHK. The chain crosses the membrane as a helical span at residues 59–79; that stretch reads FQIVIICLVILDALFVLVEVL. The Extracellular segment spans residues 80-96; it reads LDLELLAEKVDHIIPEI. A helical transmembrane segment spans residues 97-119; it reads FHYLSISVLSFFILEIAGKLYAF. The Cytoplasmic segment spans residues 120–127; that stretch reads RLEFFHHK. A helical transmembrane segment spans residues 128-148; sequence FEVFDAAIVVISFIIDIVYIS. Residues 149–155 lie on the Extracellular side of the membrane; that stretch reads REDIFNA. A helical membrane pass occupies residues 156–176; it reads VGLLILLRLWRVARIVNGIIV. Residues 177 to 226 are a coiled coil; it reads SVKTQAEDKIHRLKENQESLLEKVAHLEQQCAQQEQEIVRLQTLLQQHNV. The Cytoplasmic portion of the chain corresponds to 177–230; it reads SVKTQAEDKIHRLKENQESLLEKVAHLEQQCAQQEQEIVRLQTLLQQHNVFPAS.

The protein belongs to the hydrogen channel family. As to quaternary structure, homodimer.

The protein resides in the membrane. It localises to the cell membrane. Mediates the voltage-dependent proton permeability of excitable membranes. Forms a proton-selective channel through which protons may pass in accordance with their electrochemical gradient. In Xenopus tropicalis (Western clawed frog), this protein is Voltage-gated hydrogen channel 1 (hvcn1).